The chain runs to 221 residues: Hypoxanthine-guanine phosphoribosyltransferase (221 aa).

Ser-2 is subject to N-acetylserine. GMP contacts are provided by residues Lys-85, 110 to 118, Lys-159, and 188 to 194; these read DEVDDTRTT and WYAYPWE. Asp-114 (proton acceptor) is an active-site residue.

This sequence belongs to the purine/pyrimidine phosphoribosyltransferase family. As to quaternary structure, dimer. The cofactor is Mg(2+).

It is found in the cytoplasm. Its subcellular location is the nucleus. It catalyses the reaction IMP + diphosphate = hypoxanthine + 5-phospho-alpha-D-ribose 1-diphosphate. The enzyme catalyses GMP + diphosphate = guanine + 5-phospho-alpha-D-ribose 1-diphosphate. The protein operates within purine metabolism; IMP biosynthesis via salvage pathway; IMP from hypoxanthine: step 1/1. Its activity is regulated as follows. Subject to feedback inhibition by GMP. Functionally, converts guanine to guanosine monophosphate, and hypoxanthine to inosine monophosphate. Transfers the 5-phosphoribosyl group from 5-phosphoribosylpyrophosphate onto the purine. Plays a central role in the generation of purine nucleotides through the purine salvage pathway. The chain is Hypoxanthine-guanine phosphoribosyltransferase (HPT1) from Saccharomyces cerevisiae (strain ATCC 204508 / S288c) (Baker's yeast).